A 324-amino-acid polypeptide reads, in one-letter code: MDTLTRFLPEHLQQNQLPEALGGVLLSVVSACTEINAKVRLGALAGVLGMAGTGNIQGEDQKKLDVIANNIMIDTLKANPAVAGLASEEEDSFVSAGENGRYLVLFDPLDGSSNIDVNISVGTIFSILEKPEGALATESFLQTGRQQLAAGYVLYGPQTQLVFTFGHGVYMFTLNAENEFVLTKEKPKVPESTKEFAINMSNRRHWLPPVQQYIDELLAGETGTRGKNYNMRWVASMVAEIHRILMRGGVFMYPQDKRDPSKPGKLRLMYEANPMALILEQAGASASNARQDILGIRPESLHQRVAVIMGSSEEVDYLNRLHSK.

4 residues coordinate Mg(2+): Glu88, Asp107, Leu109, and Asp110. Substrate contacts are provided by residues 110–113, Asn199, and Lys265; that span reads DGSS. Position 271 (Glu271) interacts with Mg(2+).

It belongs to the FBPase class 1 family. In terms of assembly, homotetramer. The cofactor is Mg(2+).

Its subcellular location is the cytoplasm. It carries out the reaction beta-D-fructose 1,6-bisphosphate + H2O = beta-D-fructose 6-phosphate + phosphate. It functions in the pathway carbohydrate biosynthesis; gluconeogenesis. This is Fructose-1,6-bisphosphatase class 1 from Neisseria meningitidis serogroup A / serotype 4A (strain DSM 15465 / Z2491).